Reading from the N-terminus, the 274-residue chain is Prothoracicostatic peptide (274 aa).

Positions 1-19 are cleaved as a signal peptide; the sequence is MRWCLFALWVFGVATVVTA. Residues 20 to 67 constitute a propeptide that is removed on maturation; it reads AEEPHHDAAPQTDNEVDLTEDDKRAWSSLHSGWAKRAWQDMSSAWGKR. A Tryptophan amide modification is found at W76. A propeptide spanning residues 77–91 is cleaved from the precursor; the sequence is GKRGWQDLNSAWGKR. W100 carries the tryptophan amide modification. Positions 101–136 are excised as a propeptide; it reads GKRGWQDLNSAWGKRDDDEAMEKKSWQDLNSVWGKR. Tryptophan amide is present on W145. The propeptide occupies 146 to 148; it reads GKR. W157 carries the tryptophan amide modification. A propeptide spanning residues 158-172 is cleaved from the precursor; that stretch reads GKRGWNDISSVWGKR. W181 carries the post-translational modification Tryptophan amide. Residues 182 to 274 constitute a propeptide that is removed on maturation; that stretch reads GKRAWQDMSS…NEHSATTNEA (93 aa).

The protein localises to the secreted. In terms of biological role, inhibits ecdysteroid biosynthesis in the prothoracic gland of fifth instar larvae, with maximum inhibition during the spinning stage. When administered to day 8 fifth instar larvae it produces a significant delay in the commencement spinning behavior. The polypeptide is Prothoracicostatic peptide (Bombyx mori (Silk moth)).